A 478-amino-acid polypeptide reads, in one-letter code: Proline--tRNA ligase (478 aa).

The protein belongs to the class-II aminoacyl-tRNA synthetase family. ProS type 3 subfamily. In terms of assembly, homodimer.

It is found in the cytoplasm. The catalysed reaction is tRNA(Pro) + L-proline + ATP = L-prolyl-tRNA(Pro) + AMP + diphosphate. In terms of biological role, catalyzes the attachment of proline to tRNA(Pro) in a two-step reaction: proline is first activated by ATP to form Pro-AMP and then transferred to the acceptor end of tRNA(Pro). The protein is Proline--tRNA ligase of Methanoregula boonei (strain DSM 21154 / JCM 14090 / 6A8).